The primary structure comprises 439 residues: Histidinol dehydrogenase (439 aa).

NAD(+)-binding residues include Tyr125, Gln187, and Asn210. Residues Thr233, Gln255, and His258 each contribute to the substrate site. 2 residues coordinate Zn(2+): Gln255 and His258. Catalysis depends on proton acceptor residues Glu323 and His324. Residues His324, Asp357, Glu411, and His416 each coordinate substrate. Asp357 is a binding site for Zn(2+). His416 serves as a coordination point for Zn(2+).

Belongs to the histidinol dehydrogenase family. Zn(2+) serves as cofactor.

The catalysed reaction is L-histidinol + 2 NAD(+) + H2O = L-histidine + 2 NADH + 3 H(+). Its pathway is amino-acid biosynthesis; L-histidine biosynthesis; L-histidine from 5-phospho-alpha-D-ribose 1-diphosphate: step 9/9. Catalyzes the sequential NAD-dependent oxidations of L-histidinol to L-histidinaldehyde and then to L-histidine. The polypeptide is Histidinol dehydrogenase (Symbiobacterium thermophilum (strain DSM 24528 / JCM 14929 / IAM 14863 / T)).